The following is a 415-amino-acid chain: Serine hydroxymethyltransferase (415 aa).

(6S)-5,6,7,8-tetrahydrofolate-binding positions include Leu117 and 121–123 (GHL). Lys226 is modified (N6-(pyridoxal phosphate)lysine).

Belongs to the SHMT family. In terms of assembly, homodimer. The cofactor is pyridoxal 5'-phosphate.

Its subcellular location is the cytoplasm. It carries out the reaction (6R)-5,10-methylene-5,6,7,8-tetrahydrofolate + glycine + H2O = (6S)-5,6,7,8-tetrahydrofolate + L-serine. It functions in the pathway one-carbon metabolism; tetrahydrofolate interconversion. The protein operates within amino-acid biosynthesis; glycine biosynthesis; glycine from L-serine: step 1/1. Functionally, catalyzes the reversible interconversion of serine and glycine with tetrahydrofolate (THF) serving as the one-carbon carrier. This reaction serves as the major source of one-carbon groups required for the biosynthesis of purines, thymidylate, methionine, and other important biomolecules. Also exhibits THF-independent aldolase activity toward beta-hydroxyamino acids, producing glycine and aldehydes, via a retro-aldol mechanism. The polypeptide is Serine hydroxymethyltransferase (Dehalococcoides mccartyi (strain ATCC BAA-2100 / JCM 16839 / KCTC 5957 / BAV1)).